The primary structure comprises 272 residues: 2-succinyl-6-hydroxy-2,4-cyclohexadiene-1-carboxylate synthase (272 aa).

This sequence belongs to the AB hydrolase superfamily. MenH family. As to quaternary structure, monomer.

The catalysed reaction is 5-enolpyruvoyl-6-hydroxy-2-succinyl-cyclohex-3-ene-1-carboxylate = (1R,6R)-6-hydroxy-2-succinyl-cyclohexa-2,4-diene-1-carboxylate + pyruvate. The protein operates within quinol/quinone metabolism; 1,4-dihydroxy-2-naphthoate biosynthesis; 1,4-dihydroxy-2-naphthoate from chorismate: step 3/7. It participates in quinol/quinone metabolism; menaquinone biosynthesis. In terms of biological role, catalyzes a proton abstraction reaction that results in 2,5-elimination of pyruvate from 2-succinyl-5-enolpyruvyl-6-hydroxy-3-cyclohexene-1-carboxylate (SEPHCHC) and the formation of 2-succinyl-6-hydroxy-2,4-cyclohexadiene-1-carboxylate (SHCHC). The sequence is that of 2-succinyl-6-hydroxy-2,4-cyclohexadiene-1-carboxylate synthase from Yersinia pseudotuberculosis serotype O:1b (strain IP 31758).